Consider the following 66-residue polypeptide: Large ribosomal subunit protein bL33c (66 aa).

The protein belongs to the bacterial ribosomal protein bL33 family.

The protein localises to the plastid. Its subcellular location is the chloroplast. The protein is Large ribosomal subunit protein bL33c of Gossypium barbadense (Sea Island cotton).